A 167-amino-acid chain; its full sequence is Ribosome maturation factor RimM (167 aa).

The PRC barrel domain maps to 94-165 (ENEYYYSDII…TIRITPMEGL (72 aa)).

This sequence belongs to the RimM family. In terms of assembly, binds ribosomal protein uS19.

The protein localises to the cytoplasm. Functionally, an accessory protein needed during the final step in the assembly of 30S ribosomal subunit, possibly for assembly of the head region. Essential for efficient processing of 16S rRNA. May be needed both before and after RbfA during the maturation of 16S rRNA. It has affinity for free ribosomal 30S subunits but not for 70S ribosomes. The protein is Ribosome maturation factor RimM of Staphylococcus haemolyticus (strain JCSC1435).